A 240-amino-acid chain; its full sequence is Purine nucleoside phosphorylase DeoD-type (240 aa).

Histidine 5 is an a purine D-ribonucleoside binding site. Phosphate is bound by residues glycine 21, arginine 25, arginine 44, and 88–91 (RVGS). A purine D-ribonucleoside is bound by residues 181–183 (EME) and 205–206 (SD). Aspartate 206 functions as the Proton donor in the catalytic mechanism.

This sequence belongs to the PNP/UDP phosphorylase family. In terms of assembly, homohexamer; trimer of homodimers.

It carries out the reaction a purine D-ribonucleoside + phosphate = a purine nucleobase + alpha-D-ribose 1-phosphate. The catalysed reaction is a purine 2'-deoxy-D-ribonucleoside + phosphate = a purine nucleobase + 2-deoxy-alpha-D-ribose 1-phosphate. Functionally, catalyzes the reversible phosphorolytic breakdown of the N-glycosidic bond in the beta-(deoxy)ribonucleoside molecules, with the formation of the corresponding free purine bases and pentose-1-phosphate. This Enterobacter sp. (strain 638) protein is Purine nucleoside phosphorylase DeoD-type.